Reading from the N-terminus, the 749-residue chain is Patatin-like phospholipase domain-containing protein AN0408 (749 aa).

Residues 1–11 are compositionally biased toward basic and acidic residues; it reads MEKSAAGDNID. The tract at residues 1-21 is disordered; it reads MEKSAAGDNIDKYSPSSIPDY. Residues 92–112 form a helical membrane-spanning segment; it reads WPFLLFVLGWITFLSVGYALT. Residues 280–471 enclose the PNPLA domain; the sequence is LCLSGGATFA…RTDIPIKALN (192 aa). Residues 311-315 carry the GXSXG motif; that stretch reads GTSGG. The active-site Nucleophile is serine 313. Residue aspartate 458 is the Proton acceptor of the active site. Residues 630–659 form a disordered region; the sequence is SIQPFPFDNGAAGADQKSNDPREERLNRNF. Basic and acidic residues predominate over residues 646–659; it reads KSNDPREERLNRNF.

Belongs to the PLPL family.

It is found in the membrane. Probable lipid hydrolase. The chain is Patatin-like phospholipase domain-containing protein AN0408 from Emericella nidulans (strain FGSC A4 / ATCC 38163 / CBS 112.46 / NRRL 194 / M139) (Aspergillus nidulans).